Consider the following 308-residue polypeptide: MLRSTLSNWREYLTPITHTSTFETTGQLTPEEFVKAGDYLVHMFPTWRWNGTDYNNVSYKDFLPKEKQFLITRKVPCKLRASNFVETQTTETRDVGDGWELEGQSEGERESGREDTKSNEEALASNIEDLQIVDDDESEGGGDEEQLLQNELADDDDDIVDIKPSTLRYYDLYITYSTSYRVPKMYLCGFANEGTPLSPDQMFEDIAPDYRSKTATIEPLPFFKGNQISVSIHPCKHANVMKVLMEKVRASRHRARDTEAQKNAEEDWEDLQSDIDDGLRVDQYLVVFLKFITSVTPGIEHDYTMEGW.

Residues N83–I159 are flexible region. The segment at T89 to E121 is disordered. The span at E106–E120 shows a compositional bias: basic and acidic residues. C235 serves as the catalytic Glycyl thioester intermediate. A handle region region spans residues N239–Q283.

Belongs to the ATG3 family. As to quaternary structure, monomer. Interacts with ATG8 through an intermediate thioester bond between Cys-235 and the C-terminal Gly of ATG8. Interacts with the C-terminal region of the E1-like ATG7 enzyme. Also interacts with the ATG12-ATG5 conjugate.

The protein resides in the cytoplasm. Functionally, E2 conjugating enzyme required for the cytoplasm to vacuole transport (Cvt) and autophagy. Required for selective autophagic degradation of the nucleus (nucleophagy) as well as for mitophagy which contributes to regulate mitochondrial quantity and quality by eliminating the mitochondria to a basal level to fulfill cellular energy requirements and preventing excess ROS production. Responsible for the E2-like covalent binding of phosphatidylethanolamine to the C-terminal Gly of ATG8. The ATG12-ATG5 conjugate plays a role of an E3 and promotes the transfer of ATG8 from ATG3 to phosphatidylethanolamine (PE). This step is required for the membrane association of ATG8. The formation of the ATG8-phosphatidylethanolamine conjugate is essential for autophagy and for the cytoplasm to vacuole transport (Cvt). The ATG8-PE conjugate mediates tethering between adjacent membranes and stimulates membrane hemifusion, leading to expansion of the autophagosomal membrane during autophagy. In Kluyveromyces marxianus (strain DMKU3-1042 / BCC 29191 / NBRC 104275) (Yeast), this protein is Autophagy-related protein 3.